The following is a 172-amino-acid chain: Small ribosomal subunit protein uS5 (172 aa).

An S5 DRBM domain is found at L16 to V79.

It belongs to the universal ribosomal protein uS5 family. In terms of assembly, part of the 30S ribosomal subunit. Contacts proteins S4 and S8.

Its function is as follows. With S4 and S12 plays an important role in translational accuracy. Located at the back of the 30S subunit body where it stabilizes the conformation of the head with respect to the body. This is Small ribosomal subunit protein uS5 from Chlorobium phaeobacteroides (strain DSM 266 / SMG 266 / 2430).